The sequence spans 415 residues: Multidrug resistance protein MdtA (415 aa).

The first 21 residues, 1–21, serve as a signal peptide directing secretion; sequence MKGSYKSRWVIVIVVVIAAIA. Positions 31-47 are enriched in polar residues; sequence DSQSAAPGATKQAQQSP. Disordered regions lie at residues 31 to 60 and 392 to 415; these read DSQSAAPGATKQAQQSPAGGRRGMRSGPLA and EAQSATTPEEKATSREYAKKGARS. The segment covering 399–415 has biased composition (basic and acidic residues); it reads PEEKATSREYAKKGARS.

It belongs to the membrane fusion protein (MFP) (TC 8.A.1) family. Part of a tripartite efflux system composed of MdtA, MdtB and MdtC.

The protein resides in the cell inner membrane. The MdtABC tripartite complex confers resistance against novobiocin and deoxycholate. The polypeptide is Multidrug resistance protein MdtA (Escherichia coli O157:H7).